The chain runs to 173 residues: Translation initiation factor IF-3 (173 aa).

This sequence belongs to the IF-3 family. Monomer.

It is found in the cytoplasm. Its function is as follows. IF-3 binds to the 30S ribosomal subunit and shifts the equilibrium between 70S ribosomes and their 50S and 30S subunits in favor of the free subunits, thus enhancing the availability of 30S subunits on which protein synthesis initiation begins. The protein is Translation initiation factor IF-3 of Phenylobacterium zucineum (strain HLK1).